The chain runs to 860 residues: Leucine--tRNA ligase (860 aa).

Positions 42–52 match the 'HIGH' region motif; it reads PYPSGRLHMGH. Residues 619–623 carry the 'KMSKS' region motif; that stretch reads KMSKS. Residue lysine 622 coordinates ATP.

The protein belongs to the class-I aminoacyl-tRNA synthetase family.

The protein localises to the cytoplasm. It catalyses the reaction tRNA(Leu) + L-leucine + ATP = L-leucyl-tRNA(Leu) + AMP + diphosphate. This Klebsiella pneumoniae subsp. pneumoniae (strain ATCC 700721 / MGH 78578) protein is Leucine--tRNA ligase.